Here is a 2299-residue protein sequence, read N- to C-terminus: Acetyl-CoA carboxylase dmxL1 (2299 aa).

Positions 21 to 39 are enriched in low complexity; it reads TSIPASVPASAPPSSSAPH. The disordered stretch occupies residues 21–41; the sequence is TSIPASVPASAPPSSSAPHAA. Residues 75 to 583 enclose the Biotin carboxylation domain; that stretch reads VITNVLIANN…TTGWLDELIT (509 aa). One can recognise an ATP-grasp 1 domain in the interval 227 to 424; it reads QVAIDADGIV…LPAAQLQIAM (198 aa). 258 to 315 is a binding site for ATP; sequence AKEIGFPVMIKASEGGGGKGIRKCEQEEGFEALYNAASSEIPGSPIFIMKLAGNARHL. 3 residues coordinate Mg(2+): Glu-381, Glu-395, and Asn-397. Residues Glu-381, Glu-395, and Asn-397 each coordinate Mn(2+). A Biotinyl-binding domain is found at 710-784; sequence LEQENDPTQL…EPGDVLGILT (75 aa). The residue at position 751 (Lys-751) is an N6-biotinyllysine. Residues 1159–1208 are disordered; it reads DMEMSSQLSTPSTPATPPTPPYENGKQSKGVGSISDMSNLIENPDKEPTR. The 349-residue stretch at 1539–1887 folds into the CoA carboxyltransferase N-terminal domain; sequence PTKALEWLQP…KKNTLVPIGP (349 aa). A CoA carboxyltransferase C-terminal domain is found at 1891-2205; it reads PWDRDIVCSP…EEHILKRIAT (315 aa).

Biotin serves as cofactor. It depends on Mg(2+) as a cofactor. The cofactor is Mn(2+).

It carries out the reaction hydrogencarbonate + acetyl-CoA + ATP = malonyl-CoA + ADP + phosphate + H(+). The enzyme catalyses N(6)-biotinyl-L-lysyl-[protein] + hydrogencarbonate + ATP = N(6)-carboxybiotinyl-L-lysyl-[protein] + ADP + phosphate + H(+). Its pathway is secondary metabolite biosynthesis. It functions in the pathway lipid metabolism; malonyl-CoA biosynthesis; malonyl-CoA from acetyl-CoA: step 1/1. Functionally, acetyl-CoA carboxylase; part of the gene cluster that mediates the biosynthesis of the dimeric xanthones cryptosporioptides. The pathway begins with the synthesis of atrochrysone thioester by the polyketide synthase dmx-nrPKS. The atrochrysone carboxyl ACP thioesterase dmxR1 then breaks the thioester bond and releases the atrochrysone carboxylic acid from dmx-nrPKS. Atrochrysone carboxylic acid is decarboxylated by the decarboxylase dmxR15, and oxidized by the anthrone oxygenase dmxR16 to yield emodin. Emodin is then reduced to emodin hydroquinone by the oxidoreductase dmxR7. A-ring reduction by the short chain dehydrogenase dmxR18, dehydration by the scytalone dehydratase-like protein dmxR17 and probable spontaneous re-oxidation, results in overall deoxygenation to chrysophanol. Baeyer-Villiger oxidation by the Baeyer-Villiger monooxygenase (BVMO) dmxR6 then yields monodictylactone in equilibrium with monodictyphenone. In the case of the cryptosporioptides biosynthesis, monodictylactone is reduced at C-12 to an alcohol (by the short chain dehydrogenases dmxR12 or dmxR8) and hydroxylated at C-5 by dmxR9, yielding the electron-rich aromatic which could eliminate H(2)O to form the ortho-quinonemethide, followed by tautomerisation to paraquinone and complete the formal reduction to produce the 10-methylgroup. Conjugate addition of C-4a-OH to the resulting paraquinone by the monooxygenase dmxR10 then gives cyclohexadienone, which is then reduced at C-5 by the short chain dehydrogenase dmxR3 to give the dihydroxanthone. The 6,7-epoxide in the cryptosporioptides could be introduced by the cytochrome P450 monooxygenase dmxL3. The highly reducing PKS dmxL2 manufactures butyrate, which is further carboxylated by dmxL1 to form ethylmalonate. It is not yet clear whether the carboxylation occurs while the butyrate is attached to the ACP of dmxL2, but this unusual fungal metabolite could then be esterified to O-5 by the O-acetyltransferase dmxR13. Finally, dimerization performed by dmxR5 gives the observed dimers cryptosporioptides A, B and C as the final products of the pathway. The sequence is that of Acetyl-CoA carboxylase dmxL1 from Cryptosporiopsis sp. (strain 8999).